The chain runs to 323 residues: Ribosomal RNA small subunit methyltransferase H (323 aa).

Residues 39 to 41 (GGY), aspartate 57, phenylalanine 84, aspartate 103, and glutamine 110 each bind S-adenosyl-L-methionine.

This sequence belongs to the methyltransferase superfamily. RsmH family.

It is found in the cytoplasm. The enzyme catalyses cytidine(1402) in 16S rRNA + S-adenosyl-L-methionine = N(4)-methylcytidine(1402) in 16S rRNA + S-adenosyl-L-homocysteine + H(+). Functionally, specifically methylates the N4 position of cytidine in position 1402 (C1402) of 16S rRNA. This chain is Ribosomal RNA small subunit methyltransferase H, found in Gluconobacter oxydans (strain 621H) (Gluconobacter suboxydans).